A 331-amino-acid polypeptide reads, in one-letter code: Peroxidase 69 (331 aa).

The N-terminal stretch at Met1–Ala23 is a signal peptide. Disulfide bonds link Cys46–Cys122, Cys79–Cys84, Cys128–Cys327, and Cys205–Cys237. Residue His77 is the Proton acceptor of the active site. Ca(2+) contacts are provided by Asp78, Val81, Gly83, Asp85, and Ser87. Asn93 is a glycosylation site (N-linked (GlcNAc...) asparagine). Pro168 provides a ligand contact to substrate. His198 contacts heme b. Thr199 serves as a coordination point for Ca(2+). A glycan (N-linked (GlcNAc...) asparagine) is linked at Asn216. Residues Asp248, Ser251, and Asp256 each contribute to the Ca(2+) site.

It belongs to the peroxidase family. Classical plant (class III) peroxidase subfamily. Heme b serves as cofactor. It depends on Ca(2+) as a cofactor. Mainly expressed in roots and slightly in leaves.

Its subcellular location is the secreted. It carries out the reaction 2 a phenolic donor + H2O2 = 2 a phenolic radical donor + 2 H2O. Removal of H(2)O(2), oxidation of toxic reductants, biosynthesis and degradation of lignin, suberization, auxin catabolism, response to environmental stresses such as wounding, pathogen attack and oxidative stress. These functions might be dependent on each isozyme/isoform in each plant tissue. This chain is Peroxidase 69 (PER69), found in Arabidopsis thaliana (Mouse-ear cress).